Reading from the N-terminus, the 210-residue chain is Thymidylate kinase (210 aa).

11–18 is an ATP binding site; sequence GVDGAGKT.

The protein belongs to the thymidylate kinase family.

It carries out the reaction dTMP + ATP = dTDP + ADP. Its function is as follows. Phosphorylation of dTMP to form dTDP in both de novo and salvage pathways of dTTP synthesis. In Mycoplasma genitalium (strain ATCC 33530 / DSM 19775 / NCTC 10195 / G37) (Mycoplasmoides genitalium), this protein is Thymidylate kinase (tmk).